We begin with the raw amino-acid sequence, 354 residues long: Ornithine carbamoyltransferase, catabolic (354 aa).

Carbamoyl phosphate-binding positions include 67–70, Gln94, Arg118, and 145–148; these read STRT and HPTQ. L-ornithine is bound by residues Asn177, Asp241, and 245-246; that span reads SM. Carbamoyl phosphate is bound by residues 284–285 and Arg329; that span reads CL.

Belongs to the aspartate/ornithine carbamoyltransferase superfamily. OTCase family.

It is found in the cytoplasm. The catalysed reaction is carbamoyl phosphate + L-ornithine = L-citrulline + phosphate + H(+). It participates in amino-acid degradation; L-arginine degradation via ADI pathway; carbamoyl phosphate from L-arginine: step 2/2. Reversibly catalyzes the transfer of the carbamoyl group from carbamoyl phosphate (CP) to the N(epsilon) atom of ornithine (ORN) to produce L-citrulline. The sequence is that of Ornithine carbamoyltransferase, catabolic (arcB) from Lactococcus lactis subsp. cremoris (strain MG1363).